Here is an 835-residue protein sequence, read N- to C-terminus: Protein translocase subunit SecA (835 aa).

ATP is bound by residues Q85, G103–T107, and D492. The segment at V788–V807 is disordered. Zn(2+)-binding residues include C819, C821, C830, and C831.

This sequence belongs to the SecA family. As to quaternary structure, monomer and homodimer. Part of the essential Sec protein translocation apparatus which comprises SecA, SecYEG and auxiliary proteins SecDF. Other proteins may also be involved. The cofactor is Zn(2+).

It is found in the cell membrane. Its subcellular location is the cytoplasm. It catalyses the reaction ATP + H2O + cellular proteinSide 1 = ADP + phosphate + cellular proteinSide 2.. In terms of biological role, part of the Sec protein translocase complex. Interacts with the SecYEG preprotein conducting channel. Has a central role in coupling the hydrolysis of ATP to the transfer of proteins into and across the cell membrane, serving as an ATP-driven molecular motor driving the stepwise translocation of polypeptide chains across the membrane. This Bacillus cereus (strain ATCC 10987 / NRS 248) protein is Protein translocase subunit SecA.